The primary structure comprises 635 residues: Threonine--tRNA ligase (635 aa).

Residues 1–58 (MIRVICNNETVELPKGATAADFASKIKNSHYFAGVVINDQIKDLSTTLNEGDTLRFVT) enclose the TGS domain. Residues 237–528 (DHRVLGAKLD…LIEHFKGKFP (292 aa)) form a catalytic region. 3 residues coordinate Zn(2+): C328, H379, and H505.

This sequence belongs to the class-II aminoacyl-tRNA synthetase family. As to quaternary structure, homodimer. Zn(2+) serves as cofactor.

The protein resides in the cytoplasm. It catalyses the reaction tRNA(Thr) + L-threonine + ATP = L-threonyl-tRNA(Thr) + AMP + diphosphate + H(+). Catalyzes the attachment of threonine to tRNA(Thr) in a two-step reaction: L-threonine is first activated by ATP to form Thr-AMP and then transferred to the acceptor end of tRNA(Thr). Also edits incorrectly charged L-seryl-tRNA(Thr). The protein is Threonine--tRNA ligase of Chlamydia caviae (strain ATCC VR-813 / DSM 19441 / 03DC25 / GPIC) (Chlamydophila caviae).